The following is a 365-amino-acid chain: UDP-N-acetylglucosamine--N-acetylmuramyl-(pentapeptide) pyrophosphoryl-undecaprenol N-acetylglucosamine transferase (365 aa).

Residues 10–12 (TGG), asparagine 124, arginine 165, serine 193, isoleucine 248, and glutamine 293 each bind UDP-N-acetyl-alpha-D-glucosamine.

Belongs to the glycosyltransferase 28 family. MurG subfamily.

The protein resides in the cell inner membrane. The catalysed reaction is di-trans,octa-cis-undecaprenyl diphospho-N-acetyl-alpha-D-muramoyl-L-alanyl-D-glutamyl-meso-2,6-diaminopimeloyl-D-alanyl-D-alanine + UDP-N-acetyl-alpha-D-glucosamine = di-trans,octa-cis-undecaprenyl diphospho-[N-acetyl-alpha-D-glucosaminyl-(1-&gt;4)]-N-acetyl-alpha-D-muramoyl-L-alanyl-D-glutamyl-meso-2,6-diaminopimeloyl-D-alanyl-D-alanine + UDP + H(+). Its pathway is cell wall biogenesis; peptidoglycan biosynthesis. Functionally, cell wall formation. Catalyzes the transfer of a GlcNAc subunit on undecaprenyl-pyrophosphoryl-MurNAc-pentapeptide (lipid intermediate I) to form undecaprenyl-pyrophosphoryl-MurNAc-(pentapeptide)GlcNAc (lipid intermediate II). This chain is UDP-N-acetylglucosamine--N-acetylmuramyl-(pentapeptide) pyrophosphoryl-undecaprenol N-acetylglucosamine transferase, found in Geotalea uraniireducens (strain Rf4) (Geobacter uraniireducens).